Reading from the N-terminus, the 123-residue chain is Large ribosomal subunit protein uL24 (123 aa).

Belongs to the universal ribosomal protein uL24 family. As to quaternary structure, part of the 50S ribosomal subunit.

Functionally, one of two assembly initiator proteins, it binds directly to the 5'-end of the 23S rRNA, where it nucleates assembly of the 50S subunit. One of the proteins that surrounds the polypeptide exit tunnel on the outside of the subunit. The sequence is that of Large ribosomal subunit protein uL24 from Solibacter usitatus (strain Ellin6076).